Consider the following 392-residue polypeptide: ATP phosphoribosyltransferase regulatory subunit (392 aa).

The protein belongs to the class-II aminoacyl-tRNA synthetase family. HisZ subfamily. Heteromultimer composed of HisG and HisZ subunits.

The protein localises to the cytoplasm. The protein operates within amino-acid biosynthesis; L-histidine biosynthesis; L-histidine from 5-phospho-alpha-D-ribose 1-diphosphate: step 1/9. In terms of biological role, required for the first step of histidine biosynthesis. May allow the feedback regulation of ATP phosphoribosyltransferase activity by histidine. This Geobacillus sp. (strain WCH70) protein is ATP phosphoribosyltransferase regulatory subunit.